Reading from the N-terminus, the 509-residue chain is Dihydrolipoyl dehydrogenase, mitochondrial (509 aa).

Residues Met-1–Tyr-35 constitute a mitochondrion transit peptide. Lys-66 carries the post-translational modification N6-acetyllysine; alternate. At Lys-66 the chain carries N6-succinyllysine; alternate. Residues Glu-71–Cys-80 and Lys-89 contribute to the FAD site. Residues Cys-80 and Cys-85 are joined by a disulfide bond. N6-acetyllysine; alternate is present on residues Lys-122, Lys-132, and Lys-143. N6-succinyllysine; alternate is present on residues Lys-122, Lys-132, and Lys-143. Residue Gly-154 participates in FAD binding. An N6-succinyllysine mark is found at Lys-159 and Lys-166. Thr-183–Ser-185 provides a ligand contact to FAD. Residues Gly-220–Glu-227 and Glu-243 contribute to the NAD(+) site. An N6-succinyllysine mark is found at Lys-273 and Lys-277. Position 278 (Val-278) interacts with NAD(+). Phosphoserine is present on residues Ser-285 and Ser-297. Gly-314 is an NAD(+) binding site. Lys-346 is modified (N6-acetyllysine). FAD is bound by residues Asp-355 and Met-361–His-364. At Lys-410 the chain carries N6-acetyllysine; alternate. The residue at position 410 (Lys-410) is an N6-succinyllysine; alternate. Residues Lys-417 and Lys-420 each carry the N6-acetyllysine modification. N6-succinyllysine is present on Lys-430. His-487 (proton acceptor) is an active-site residue. Ser-502 carries the phosphoserine modification. Lys-505 is subject to N6-acetyllysine; alternate. Residue Lys-505 is modified to N6-succinyllysine; alternate.

Belongs to the class-I pyridine nucleotide-disulfide oxidoreductase family. In terms of assembly, homodimer. Part of the multimeric pyruvate dehydrogenase complex that contains multiple copies of pyruvate dehydrogenase (subunits PDHA (PDHA1 or PDHA2) and PDHB, E1), dihydrolipoamide acetyltransferase (DLAT, E2) and lipoamide dehydrogenase (DLD, E3). These subunits are bound to an inner core composed of about 48 DLAT and 12 PDHX molecules (by non covalent bonds). The 2-oxoglutarate dehydrogenase complex is composed of OGDH (2-oxoglutarate dehydrogenase; E1), DLST (dihydrolipoamide succinyltransferase; E2), DLD (dihydrolipoamide dehydrogenase; E3) and the assembly factor KGD4. It contains multiple copies of the three enzymatic components (E1, E2 and E3). In the nucleus, the 2-oxoglutarate dehydrogenase complex associates with KAT2A. Interacts with PDHX. Requires FAD as cofactor. In terms of processing, tyrosine phosphorylated.

The protein localises to the mitochondrion matrix. Its subcellular location is the nucleus. It localises to the cell projection. It is found in the cilium. The protein resides in the flagellum. The protein localises to the cytoplasmic vesicle. Its subcellular location is the secretory vesicle. It localises to the acrosome. The enzyme catalyses N(6)-[(R)-dihydrolipoyl]-L-lysyl-[protein] + NAD(+) = N(6)-[(R)-lipoyl]-L-lysyl-[protein] + NADH + H(+). In terms of biological role, lipoamide dehydrogenase is a component of the glycine cleavage system as well as an E3 component of three alpha-ketoacid dehydrogenase complexes (pyruvate-, alpha-ketoglutarate-, and branched-chain amino acid-dehydrogenase complex). The 2-oxoglutarate dehydrogenase complex is mainly active in the mitochondrion. A fraction of the 2-oxoglutarate dehydrogenase complex also localizes in the nucleus and is required for lysine succinylation of histones: associates with KAT2A on chromatin and provides succinyl-CoA to histone succinyltransferase KAT2A. In monomeric form may have additional moonlighting function as serine protease. Involved in the hyperactivation of spermatazoa during capacitation and in the spermatazoal acrosome reaction. In Cricetulus griseus (Chinese hamster), this protein is Dihydrolipoyl dehydrogenase, mitochondrial (DLD).